The following is a 448-amino-acid chain: MSLAVVFLLGFLAVSHGQQAGTETEEYHLPLTWERDGSSVSASVVIDSNWRWTHSTEDTTNCYDGNEWDSTLCPDADTCTENCAIDGVDQGTWGDTYGITASGSKLTLSFVTEGEYSTDIGSRVFLMADDDNYEIFNLLDKEFSFDVDASNLPCGLNGALYFVSMDEDGGTSKYSTNTAGAKYGTGYCDAQCPHDMKFIAGKANSDGWTPSDNDQNAGTGEMGACCHEMDIWEANSQAQSYTAHVCSVDGYTPCTGTDCGDNGDDRYKGVCDKDGCDYAAYRLGQHDFYGEGGTVDSGSTLTVITQFITGGGGLNEIRRIYQQGGQTIQNAAVNFPGDVDPYDSITEDFCVDIKRYFGDTNDFDAKGGMSGMSNALKKGMVLVMSLWDDHYANMLWLDATYPVDSTEPGALRGPCSTDSGDPADVEANFPGSTVTFSNIKIGPIQSYD.

The N-terminal stretch at 1 to 17 is a signal peptide; it reads MSLAVVFLLGFLAVSHG. Gln18 carries the post-translational modification Pyrrolidone carboxylic acid. Disulfide bonds link Cys62/Cys83 and Cys73/Cys79. Residues Tyr97, 119 to 120, and Lys197 each bind substrate; that span reads DI. 6 cysteine pairs are disulfide-bonded: Cys154-Cys415, Cys188-Cys226, Cys192-Cys225, Cys246-Cys271, Cys254-Cys259, and Cys276-Cys350. Glu228 (nucleophile) is an active-site residue. Residues 230 to 233 and His244 contribute to the substrate site; that span reads DIWE. Glu233 (proton donor/acceptor) is an active-site residue. Residues Arg266 and Asp274 each contribute to the substrate site. Positions 396 and 412 each coordinate substrate.

It belongs to the glycosyl hydrolase 7 (cellulase C) family. Monomer. In terms of tissue distribution, highly expressed in the hepatopancreas (at protein level). Little or no expression detected in the hindgut or the rest of the body (at protein level).

It localises to the secreted. The enzyme catalyses Hydrolysis of (1-&gt;4)-beta-D-glucosidic linkages in cellulose and cellotetraose, releasing cellobiose from the non-reducing ends of the chains.. Functionally, exocellobiohydrolase (CBH) that catalyzes the hydrolysis of 1,4-beta-D-glucosidic bonds in cellulose to release the disaccharide cellobiose. The degradation of cellulose involves an interplay between different cellulolytic enzymes. Hydrolysis starts with endoglucanases (EGs), which cut internal beta-1,4-glucosidic bonds in cellulose to reduce the polymerization degree of the substrate and create new chain ends for exocellobiohydrolases (CBHs). The CBHs release the disaccharide cellobiose from the non-reducing end of the cellulose polymer chain. Finally, beta-1,4-glucosidases hydrolyze the cellobiose and other short cello-oligosaccharides into glucose units. This chain is Exoglucanase GH7B, found in Limnoria quadripunctata (Gribble).